Here is a 319-residue protein sequence, read N- to C-terminus: L-lactate dehydrogenase 2 (319 aa).

NAD(+)-binding positions include valine 16, aspartate 37, lysine 42, tyrosine 68, and 82 to 83 (GA). Substrate contacts are provided by glutamine 85 and arginine 91. NAD(+)-binding positions include serine 104, 121–123 (AAN), and serine 146. 123–126 (NPVD) provides a ligand contact to substrate. A substrate-binding site is contributed by 151–154 (DSAR). The active-site Proton acceptor is the histidine 178. Tyrosine 222 carries the phosphotyrosine modification. Threonine 231 contacts substrate.

The protein belongs to the LDH/MDH superfamily. LDH family. In terms of assembly, homotetramer.

It is found in the cytoplasm. It catalyses the reaction (S)-lactate + NAD(+) = pyruvate + NADH + H(+). It participates in fermentation; pyruvate fermentation to lactate; (S)-lactate from pyruvate: step 1/1. In terms of biological role, catalyzes the conversion of lactate to pyruvate (Potential). Contributes to S.aureus growth during nitrosative stress in both aerobically and anaerobically cultured cells, despite playing a secondary role in this resistance mechanism. This chain is L-lactate dehydrogenase 2, found in Staphylococcus aureus (strain Mu3 / ATCC 700698).